The chain runs to 141 residues: Putative pre-16S rRNA nuclease (141 aa).

Belongs to the YqgF nuclease family.

It is found in the cytoplasm. Its function is as follows. Could be a nuclease involved in processing of the 5'-end of pre-16S rRNA. This is Putative pre-16S rRNA nuclease from Aliivibrio fischeri (strain ATCC 700601 / ES114) (Vibrio fischeri).